The chain runs to 345 residues: Methionine import ATP-binding protein MetN (345 aa).

The ABC transporter domain maps to 2-241; sequence IKLNNIXKIF…PKTELAQEFI (240 aa). An ATP-binding site is contributed by 38–45; the sequence is GASGAGKS.

It belongs to the ABC transporter superfamily. Methionine importer (TC 3.A.1.24) family. The complex is composed of two ATP-binding proteins (MetN), two transmembrane proteins (MetI) and a solute-binding protein (MetQ).

It localises to the cell inner membrane. The enzyme catalyses L-methionine(out) + ATP + H2O = L-methionine(in) + ADP + phosphate + H(+). It catalyses the reaction D-methionine(out) + ATP + H2O = D-methionine(in) + ADP + phosphate + H(+). Its function is as follows. Part of the ABC transporter complex MetNIQ involved in methionine import. Responsible for energy coupling to the transport system. The polypeptide is Methionine import ATP-binding protein MetN (Haemophilus influenzae (strain ATCC 51907 / DSM 11121 / KW20 / Rd)).